A 355-amino-acid polypeptide reads, in one-letter code: NADH-quinone oxidoreductase subunit H (355 aa).

Transmembrane regions (helical) follow at residues 25–45 (IVRI…LILW), 91–111 (WLYL…WAVI), 126–146 (LLYA…AGWA), 170–190 (MGFA…SEIV), 205–225 (FLSW…VSGI), 253–273 (MAFA…SALA), 290–310 (FIPG…VFIW), and 330–350 (VFLP…MSPL).

It belongs to the complex I subunit 1 family. NDH-1 is composed of 14 different subunits. Subunits NuoA, H, J, K, L, M, N constitute the membrane sector of the complex.

The protein localises to the cell inner membrane. It catalyses the reaction a quinone + NADH + 5 H(+)(in) = a quinol + NAD(+) + 4 H(+)(out). NDH-1 shuttles electrons from NADH, via FMN and iron-sulfur (Fe-S) centers, to quinones in the respiratory chain. The immediate electron acceptor for the enzyme in this species is believed to be ubiquinone. Couples the redox reaction to proton translocation (for every two electrons transferred, four hydrogen ions are translocated across the cytoplasmic membrane), and thus conserves the redox energy in a proton gradient. This subunit may bind ubiquinone. This is NADH-quinone oxidoreductase subunit H from Burkholderia ambifaria (strain MC40-6).